The sequence spans 378 residues: Squalene methyltransferase 2 (378 aa).

A helical transmembrane segment spans residues 17–37 (LLTVKGATGLIAALILGYIII).

The protein belongs to the class I-like SAM-binding methyltransferase superfamily. Erg6/SMT family.

The protein localises to the microsome membrane. The catalysed reaction is squalene + 2 S-adenosyl-L-methionine = 3,22-dimethyl-1,2,23,24-tetradehydro-2,3,22,23-tetrahydrosqualene + 2 S-adenosyl-L-homocysteine + 2 H(+). Its function is as follows. Converts squalene to mono- and dimethyl derivatives, but not to tri- and tetramethylated products. Unable to methylate cycloartenol, zymosterol or lanosterol. Methylates both C-3 and C22 positions, but only C-3 position in monomethylated products. Produces mainly monomethylated squalene and only 20% of dimethylated squalene. The protein is Squalene methyltransferase 2 (TMT-2) of Botryococcus braunii (Green alga).